Reading from the N-terminus, the 222-residue chain is von Willebrand factor C domain-containing protein 2-like (222 aa).

The first 21 residues, Met1 to Ser21, serve as a signal peptide directing secretion. VWFC domains follow at residues Lys51–Lys110 and Asn114–Lys172.

In terms of assembly, peripherally associated with AMPAR complex. AMPAR complex consists of an inner core made of 4 pore-forming GluA/GRIA proteins (GRIA1, GRIA2, GRIA3 and GRIA4) and 4 major auxiliary subunits arranged in a twofold symmetry. One of the two pairs of distinct binding sites is occupied either by CNIH2, CNIH3 or CACNG2, CACNG3. The other harbors CACNG2, CACNG3, CACNG4, CACNG8 or GSG1L. This inner core of AMPAR complex is complemented by outer core constituents binding directly to the GluA/GRIA proteins at sites distinct from the interaction sites of the inner core constituents. Outer core constituents include at least PRRT1, PRRT2, CKAMP44/SHISA9, FRRS1L and NRN1. The proteins of the inner and outer core serve as a platform for other, more peripherally associated AMPAR constituents, including VWC2L. Alone or in combination, these auxiliary subunits control the gating and pharmacology of the AMPAR complex and profoundly impact their biogenesis and protein processing. Predominantly expressed in the brain (at protein level). Also detected in bones, including femur and calvaria, heart, lung and kidney. Isoform 5 is predominant in lung and heart, compared to isoforms 1 and 3. Isoform 4 is expressed in femur and calvaria at higher levels than isoforms 1 and 5. Isoforms 1 and 4 are expressed at higher levels than isoform 5 in kidney and brain.

It localises to the secreted. Its subcellular location is the synapse. Its function is as follows. May play a role in neurogenesis. May promote matrix mineralization, but has been shown to weakly, but significantly inhibit BMP2 and BMP6 activity in a preosteoblastic cell line. The chain is von Willebrand factor C domain-containing protein 2-like (Vwc2l) from Mus musculus (Mouse).